The sequence spans 516 residues: tRNA-2-methylthio-N(6)-dimethylallyladenosine synthase (516 aa).

The MTTase N-terminal domain occupies 17 to 133; it reads RSFEVRTFGC…LPSLLSRSEH (117 aa). Residues cysteine 26, cysteine 62, cysteine 96, cysteine 170, cysteine 174, and cysteine 177 each coordinate [4Fe-4S] cluster. A Radical SAM core domain is found at 156–392; that stretch reads RESAYAGWVS…LALQERISTE (237 aa). The TRAM domain maps to 395–466; that stretch reads AKLIGTEVEL…PFFLIADSGV (72 aa). 2 disordered regions span residues 409 to 438 and 492 to 516; these read SGGRKNDKTQRMTGRSRDGRLVHFDPQGHV and GLGLPSIGSPAQKRSETSKSSGCGC. Basic and acidic residues predominate over residues 412–438; it reads RKNDKTQRMTGRSRDGRLVHFDPQGHV.

It belongs to the methylthiotransferase family. MiaB subfamily. In terms of assembly, monomer. [4Fe-4S] cluster serves as cofactor.

The protein resides in the cytoplasm. The enzyme catalyses N(6)-dimethylallyladenosine(37) in tRNA + (sulfur carrier)-SH + AH2 + 2 S-adenosyl-L-methionine = 2-methylsulfanyl-N(6)-dimethylallyladenosine(37) in tRNA + (sulfur carrier)-H + 5'-deoxyadenosine + L-methionine + A + S-adenosyl-L-homocysteine + 2 H(+). Catalyzes the methylthiolation of N6-(dimethylallyl)adenosine (i(6)A), leading to the formation of 2-methylthio-N6-(dimethylallyl)adenosine (ms(2)i(6)A) at position 37 in tRNAs that read codons beginning with uridine. The polypeptide is tRNA-2-methylthio-N(6)-dimethylallyladenosine synthase (Corynebacterium diphtheriae (strain ATCC 700971 / NCTC 13129 / Biotype gravis)).